The sequence spans 185 residues: MSPSLQEGAQLGESKPSTCSFSIERILGLDQNKDCVPLMKPHRPWADTCSSSGKDGNLCLHVPNPPSGISFPSVVDHPMPEERALKYENYFSASERLSLKRELSWYRGRRPRTAFTQNQIEVLENVFRVNCYPGIDIREDLAQKLNLEEDRIQIWFQNRRAKLKRSHRESQFLMAKKNFNTNLLE.

A DNA-binding region (homeobox) is located at residues 108-167 (GRRPRTAFTQNQIEVLENVFRVNCYPGIDIREDLAQKLNLEEDRIQIWFQNRRAKLKRSH).

This sequence belongs to the ANF homeobox family. Can form heterodimers with PROP1 in binding to DNA. Interacts with TLE1.

The protein localises to the nucleus. Its function is as follows. Required for the normal development of the forebrain, eyes and other anterior structures such as the olfactory placodes and pituitary gland. Possible transcriptional repressor. Binds to the palindromic PIII sequence, 5'-AGCTTGAGTCTAATTGAATTAACTGTAC-3'. HESX1 and PROP1 bind as heterodimers on this palindromic site, and, in vitro, HESX1 can antagonize PROP1 activation. The protein is Homeobox expressed in ES cells 1 (HESX1) of Pan troglodytes (Chimpanzee).